Reading from the N-terminus, the 215-residue chain is Probable GTP-binding protein EngB (215 aa).

In terms of domain architecture, EngB-type G spans 31–215; that stretch reads GPPEIAFAGR…RTAILQAVVQ (185 aa). Residues 39-46, 66-70, 93-96, 160-163, and 194-196 contribute to the GTP site; these read GRSNVGKS, GRTQE, DMPG, TKSD, and TSA. Residues Ser46 and Thr68 each coordinate Mg(2+).

It belongs to the TRAFAC class TrmE-Era-EngA-EngB-Septin-like GTPase superfamily. EngB GTPase family. Mg(2+) is required as a cofactor.

Functionally, necessary for normal cell division and for the maintenance of normal septation. This chain is Probable GTP-binding protein EngB, found in Bartonella bacilliformis (strain ATCC 35685 / KC583 / Herrer 020/F12,63).